Here is a 98-residue protein sequence, read N- to C-terminus: DNA-binding protein Fis (98 aa).

A DNA-binding region (H-T-H motif) is located at residues 74 to 93; that stretch reads QTRAATMLGINRGTLRKKLK.

It belongs to the transcriptional regulatory Fis family. In terms of assembly, homodimer.

Functionally, activates ribosomal RNA transcription. Plays a direct role in upstream activation of rRNA promoters. This chain is DNA-binding protein Fis, found in Histophilus somni (strain 2336) (Haemophilus somnus).